The chain runs to 841 residues: mRNA export factor ICP27 homolog (841 aa).

Disordered stretches follow at residues Pro-12–Lys-82 and Arg-115–Asp-163. The segment covering Tyr-32–Tyr-49 has biased composition (low complexity). The span at Met-66 to Gln-79 shows a compositional bias: pro residues. Low complexity predominate over residues Ser-132 to Ser-147. Residues Cys-298, His-411, Cys-413, and Cys-418 each coordinate Zn(2+). The segment at Cys-298–Cys-418 adopts a CHC2-type zinc-finger fold. Disordered regions lie at residues His-444–His-749 and Ser-774–Pro-811. The segment covering Val-495–Asp-507 has biased composition (basic and acidic residues). A compositionally biased stretch (basic residues) spans Asn-514 to Arg-526. The span at Arg-553 to Gly-563 shows a compositional bias: basic and acidic residues. Composition is skewed to low complexity over residues Lys-568–His-579 and Ser-591–Thr-603. Over residues Met-614–Pro-623 the composition is skewed to pro residues. Positions Arg-641 to Leu-657 are enriched in basic and acidic residues. Residues Asp-688–Ser-699 are compositionally biased toward low complexity. A compositionally biased stretch (basic and acidic residues) spans Glu-708 to Asp-731. 2 stretches are compositionally biased toward acidic residues: residues Phe-732–His-749 and Asp-793–Asp-809.

It belongs to the HHV-1 ICP27 protein family.

It is found in the virion tegument. It localises to the virion. The protein localises to the host nucleus. The protein resides in the host cytoplasm. Functionally, immediate early (EI) protein that plays many roles during productive infection including regulation of viral gene expression and nuclear export of intronless viral RNAs. The sequence is that of mRNA export factor ICP27 homolog from Mus musculus (Mouse).